Here is a 387-residue protein sequence, read N- to C-terminus: Alkanesulfonate monooxygenase (387 aa).

Belongs to the SsuD family.

The enzyme catalyses an alkanesulfonate + FMNH2 + O2 = an aldehyde + FMN + sulfite + H2O + 2 H(+). Functionally, catalyzes the desulfonation of aliphatic sulfonates. This chain is Alkanesulfonate monooxygenase, found in Ralstonia pickettii (strain 12J).